Reading from the N-terminus, the 137-residue chain is Ribosome-binding factor A (137 aa).

Belongs to the RbfA family. In terms of assembly, monomer. Binds 30S ribosomal subunits, but not 50S ribosomal subunits or 70S ribosomes.

It localises to the cytoplasm. Its function is as follows. One of several proteins that assist in the late maturation steps of the functional core of the 30S ribosomal subunit. Associates with free 30S ribosomal subunits (but not with 30S subunits that are part of 70S ribosomes or polysomes). Required for efficient processing of 16S rRNA. May interact with the 5'-terminal helix region of 16S rRNA. The protein is Ribosome-binding factor A of Shewanella amazonensis (strain ATCC BAA-1098 / SB2B).